Reading from the N-terminus, the 83-residue chain is Putative snRNP Sm-like protein (83 aa).

One can recognise a Sm domain in the interval 9–81 (KPMDVLKSAL…VIFVSPSKGD (73 aa)).

Belongs to the snRNP Sm proteins family.

This is Putative snRNP Sm-like protein from Thermoplasma acidophilum (strain ATCC 25905 / DSM 1728 / JCM 9062 / NBRC 15155 / AMRC-C165).